The chain runs to 138 residues: MRHGKVHRKLNRTAEHRKAMFANMSASLIKHEQIVTTLPKAKELRPIVEKLVTLGKKGGLAKRRQAISEMRDIDQVKKLFDVLAPRYKDRHGGYTRIIKAGFRYGDNAPMAVIEFVDRDVEAKGQDSGPVQNEASEAA.

Belongs to the bacterial ribosomal protein bL17 family. Part of the 50S ribosomal subunit. Contacts protein L32.

The polypeptide is Large ribosomal subunit protein bL17 (Nitrobacter winogradskyi (strain ATCC 25391 / DSM 10237 / CIP 104748 / NCIMB 11846 / Nb-255)).